Here is a 667-residue protein sequence, read N- to C-terminus: Leucine-rich repeat-containing protein 43 (667 aa).

Over residues 1 to 11 (METSESSTSDY) the composition is skewed to polar residues. The disordered stretch occupies residues 1–24 (METSESSTSDYRQTEGEGEGVPGT). LRR repeat units follow at residues 148 to 169 (KLEELVLSANKIEEIDANNLPP), 170 to 191 (TLKVLELYGNLIASMECLCSAP), 194 to 213 (RLQHLGLGHNKLLGPLESLY), and 221 to 242 (QLVSLDLGFNNLTDLQNMILGL). The region spanning 256–294 (NPLSLVPYYRGFTIDSLAHLCVLDDITVSPNEKHQFRGL) is the LRRCT domain. 3 disordered regions span residues 374–407 (FSGTDEEDQQEDPLDGRHRHRGRQRFHPGSTEEM), 533–570 (ESPLPAKKGKDNNKKKEPAKDKVHKKKKEPPRELRQDP), and 616–640 (SKKVKKSLKKDRSKTVPPTMESGYQ). The segment covering 377-386 (TDEEDQQEDP) has biased composition (acidic residues). Residues 390–399 (RHRHRGRQRF) are compositionally biased toward basic residues. Positions 540–553 (KGKDNNKKKEPAKD) are enriched in basic and acidic residues. Residues 617–627 (KKVKKSLKKDR) show a composition bias toward basic residues.

The sequence is that of Leucine-rich repeat-containing protein 43 (Lrrc43) from Mus musculus (Mouse).